Consider the following 1435-residue polypeptide: Guanine nucleotide exchange factor LTE1 (1435 aa).

In terms of domain architecture, N-terminal Ras-GEF spans 25–157; that stretch reads VSKPVNSADL…SCIINLKKNW (133 aa). Positions 235-256 are disordered; it reads KLQSSNSSKNQRSPSMLLFPDN. The segment covering 237 to 249 has biased composition (low complexity); that stretch reads QSSNSSKNQRSPS. At serine 271 the chain carries Phosphoserine. Residues 338 to 365 form a disordered region; the sequence is QSGTLQGTSTTSSLDNNSNSNSRSNTSS. Serine 559 bears the Phosphoserine mark. Residues 582-606 are compositionally biased toward basic and acidic residues; it reads KDNSSSRTDENGPQRLLFHETDKTN. A disordered region spans residues 582-689; it reads KDNSSSRTDE…VRNIVNNTDS (108 aa). Residues 621-632 are compositionally biased toward polar residues; sequence SQSQKSMTSSPL. Residues 654–667 show a composition bias toward low complexity; that stretch reads SITYSYDSELSSSS. Serine 689 bears the Phosphoserine mark. A Phosphothreonine modification is found at threonine 691. Residues 723 to 744 are compositionally biased toward basic and acidic residues; sequence EKNYDNKENQESEYESTKKLDN. A disordered region spans residues 723-747; the sequence is EKNYDNKENQESEYESTKKLDNSLD. Serine 808 and serine 810 each carry phosphoserine. The interval 851–871 is disordered; that stretch reads AQNSPLKQTQNPQREFPNGTS. 2 positions are modified to phosphoserine: serine 1028 and serine 1109. The region spanning 1194–1434 is the Ras-GEF domain; the sequence is DSLSVAQQMT…LTQEEINELS (241 aa).

Belongs to the LTE1 family. As to quaternary structure, interacts with CDC24, CDC42, KEL1, KEL2, RAS2 and TEM1. Phosphorylated by CDC28 in a cell cycle-dependent manner and in response to nocodazole. Dephosphorylion by CDC14 triggers LTE1 release from bud cortex during the exit of mitosis.

Its subcellular location is the cytoplasm. The protein resides in the bud. Functionally, GDP-GTP exchange factor for TEM1, a Ras-like protein, component of the mitotic exit network (MEN). Activation of TEM1 by LTE1 in the bud ultimately leads to activation of CDC15 followed by the release of CDC14 from the nucleolus, which then inactivates cyclin-dependent kinases (CDKs) activity by several mechanism. Required for TEM1 localization to the bud cortex during mitotic exit. Fine-tunes the timing of the mitotic exit and couples this event with cytokinesis. In terms of biological role, involved in proprotein-processing like proalpha factor-processing in the secretory pathway. In Saccharomyces cerevisiae (strain ATCC 204508 / S288c) (Baker's yeast), this protein is Guanine nucleotide exchange factor LTE1 (LTE1).